Reading from the N-terminus, the 380-residue chain is Cytochrome b (380 aa).

The next 4 helical transmembrane spans lie at 33-53 (FGSL…FLAM), 77-98 (WLIR…FIHV), 113-133 (WNIG…GYVL), and 178-198 (FFAF…VHLL). H83 and H97 together coordinate heme b. Heme b-binding residues include H182 and H196. H201 contributes to the a ubiquinone binding site. 4 helical membrane-spanning segments follow: residues 226–246 (IKDL…VLFF), 288–308 (LGGV…PLLN), 320–340 (ITQV…XXXX), and 347–367 (XXXX…IFMP).

It belongs to the cytochrome b family. As to quaternary structure, the cytochrome bc1 complex contains 11 subunits: 3 respiratory subunits (MT-CYB, CYC1 and UQCRFS1), 2 core proteins (UQCRC1 and UQCRC2) and 6 low-molecular weight proteins (UQCRH/QCR6, UQCRB/QCR7, UQCRQ/QCR8, UQCR10/QCR9, UQCR11/QCR10 and a cleavage product of UQCRFS1). This cytochrome bc1 complex then forms a dimer. Heme b is required as a cofactor.

The protein resides in the mitochondrion inner membrane. Its function is as follows. Component of the ubiquinol-cytochrome c reductase complex (complex III or cytochrome b-c1 complex) that is part of the mitochondrial respiratory chain. The b-c1 complex mediates electron transfer from ubiquinol to cytochrome c. Contributes to the generation of a proton gradient across the mitochondrial membrane that is then used for ATP synthesis. The sequence is that of Cytochrome b (MT-CYB) from Rhipidomys leucodactylus (White-footed climbing mouse).